The following is a 147-amino-acid chain: Protein-export protein SecB 2 (147 aa).

It belongs to the SecB family. Homotetramer, a dimer of dimers. One homotetramer interacts with 1 SecA dimer.

Its subcellular location is the cytoplasm. Functionally, one of the proteins required for the normal export of preproteins out of the cell cytoplasm. It is a molecular chaperone that binds to a subset of precursor proteins, maintaining them in a translocation-competent state. It also specifically binds to its receptor SecA. The polypeptide is Protein-export protein SecB 2 (Francisella tularensis subsp. novicida (strain U112)).